Here is a 339-residue protein sequence, read N- to C-terminus: Ketol-acid reductoisomerase (NADP(+)) (339 aa).

The KARI N-terminal Rossmann domain occupies 1 to 182 (MRVYYDRDAD…GGGRAGIIET (182 aa)). NADP(+) contacts are provided by residues 24–27 (YGSQ), Arg-48, Ser-51, Thr-53, and 83–86 (DELQ). The active site involves His-108. Gly-134 provides a ligand contact to NADP(+). The 146-residue stretch at 183 to 328 (SFKEECETDL…AKLREMMPWI (146 aa)) folds into the KARI C-terminal knotted domain. Residues Asp-191, Glu-195, Glu-227, and Glu-231 each contribute to the Mg(2+) site. Ser-252 provides a ligand contact to substrate.

Belongs to the ketol-acid reductoisomerase family. It depends on Mg(2+) as a cofactor.

It catalyses the reaction (2R)-2,3-dihydroxy-3-methylbutanoate + NADP(+) = (2S)-2-acetolactate + NADPH + H(+). The enzyme catalyses (2R,3R)-2,3-dihydroxy-3-methylpentanoate + NADP(+) = (S)-2-ethyl-2-hydroxy-3-oxobutanoate + NADPH + H(+). The protein operates within amino-acid biosynthesis; L-isoleucine biosynthesis; L-isoleucine from 2-oxobutanoate: step 2/4. It participates in amino-acid biosynthesis; L-valine biosynthesis; L-valine from pyruvate: step 2/4. Involved in the biosynthesis of branched-chain amino acids (BCAA). Catalyzes an alkyl-migration followed by a ketol-acid reduction of (S)-2-acetolactate (S2AL) to yield (R)-2,3-dihydroxy-isovalerate. In the isomerase reaction, S2AL is rearranged via a Mg-dependent methyl migration to produce 3-hydroxy-3-methyl-2-ketobutyrate (HMKB). In the reductase reaction, this 2-ketoacid undergoes a metal-dependent reduction by NADPH to yield (R)-2,3-dihydroxy-isovalerate. The polypeptide is Ketol-acid reductoisomerase (NADP(+)) (Rhodopseudomonas palustris (strain BisB5)).